Here is a 452-residue protein sequence, read N- to C-terminus: Rhodopsin (452 aa).

Residues methionine 1–valine 33 lie on the Extracellular side of the membrane. Asparagine 8 carries an N-linked (GlcNAc...) asparagine glycan. A helical transmembrane segment spans residues tyrosine 34 to leucine 58. The Cytoplasmic segment spans residues phenylalanine 59–asparagine 70. The helical transmembrane segment at methionine 71–phenylalanine 97 threads the bilayer. The Extracellular segment spans residues methionine 98–lysine 109. Cysteine 108 and cysteine 186 are joined by a disulfide. The helical transmembrane segment at valine 110–isoleucine 131 threads the bilayer. The 'Ionic lock' involved in activated form stabilization signature appears at aspartate 132–tyrosine 134. At aspartate 132 to lysine 151 the chain is on the cytoplasmic side. Residues alanine 152–phenylalanine 172 form a helical membrane-spanning segment. Residues glycine 173–serine 199 are Extracellular-facing. The helical transmembrane segment at asparagine 200–valine 224 threads the bilayer. At methionine 225–lysine 261 the chain is on the cytoplasmic side. The chain crosses the membrane as a helical span at residues isoleucine 262–leucine 283. Topologically, residues alanine 284–threonine 293 are extracellular. The helical transmembrane segment at proline 294–tyrosine 315 threads the bilayer. Lysine 305 is modified (N6-(retinylidene)lysine). The Cytoplasmic segment spans residues serine 316–alanine 452. 2 S-palmitoyl cysteine lipidation sites follow: cysteine 336 and cysteine 337. Disordered regions lie at residues aspartate 346 to alanine 365 and methionine 376 to alanine 452. The span at methionine 376–proline 388 shows a compositional bias: low complexity. Residues alanine 389–alanine 440 show a composition bias toward pro residues.

It belongs to the G-protein coupled receptor 1 family. Opsin subfamily. In terms of processing, contains one covalently linked retinal chromophore. Upon light absorption, the covalently bound 11-cis-retinal is converted to all-trans-retinal. After hydrolysis of the Schiff base and release of the covalently bound all-trans-retinal, active rhodopsin is regenerated by binding of a fresh molecule of 11-cis-retinal.

The protein localises to the cell projection. Its subcellular location is the rhabdomere membrane. Its function is as follows. Photoreceptor required for image-forming vision at low light intensity. Light-induced isomerization of 11-cis to all-trans retinal triggers a conformational change that activates signaling via G-proteins. Signaling mediates the activation of phospholipase C. Subsequent receptor phosphorylation mediates displacement of the bound G-protein alpha subunit by arrestin and terminates signaling. This Loligo forbesii (Veined squid) protein is Rhodopsin (RHO).